We begin with the raw amino-acid sequence, 160 residues long: Epithelial membrane protein 1 (160 aa).

The helical transmembrane segment at 1-21 (MLVLLAGLFVVHIATAIMLFV) threads the bilayer. 2 N-linked (GlcNAc...) asparagine glycosylation sites follow: asparagine 35 and asparagine 43. 2 helical membrane passes run 67–87 (FMILSIIFSIISLVVFVFQLF) and 95–115 (FFLSGSTMLVCWLCILVGVSI). Asparagine 128 is a glycosylation site (N-linked (GlcNAc...) asparagine). The helical transmembrane segment at 137-157 (FILTWICFCFSFIIGILYMVL) threads the bilayer.

It belongs to the PMP-22/EMP/MP20 family.

Its subcellular location is the membrane. In Mus musculus (Mouse), this protein is Epithelial membrane protein 1 (Emp1).